The chain runs to 239 residues: Large ribosomal subunit protein uL2 (239 aa).

Disordered regions lie at residues 1–28 (MGKR…VGPA) and 199–239 (SHPH…RRKG). A compositionally biased stretch (basic residues) spans 225 to 239 (KVGHIAARRTGRRKG).

This sequence belongs to the universal ribosomal protein uL2 family. As to quaternary structure, part of the 50S ribosomal subunit. Forms a bridge to the 30S subunit in the 70S ribosome.

One of the primary rRNA binding proteins. Required for association of the 30S and 50S subunits to form the 70S ribosome, for tRNA binding and peptide bond formation. It has been suggested to have peptidyltransferase activity; this is somewhat controversial. Makes several contacts with the 16S rRNA in the 70S ribosome. This chain is Large ribosomal subunit protein uL2, found in Staphylothermus marinus (strain ATCC 43588 / DSM 3639 / JCM 9404 / F1).